The primary structure comprises 871 residues: Ubiquitin carboxyl-terminal hydrolase 8 (871 aa).

Positions 4 to 99 (TSPDESPDST…GETGEASVSG (96 aa)) constitute a DUSP domain. Residues 279–869 (TGLQNLGNTC…AAYVLFYKRL (591 aa)) enclose the USP domain. The Nucleophile role is filled by cysteine 288. The disordered stretch occupies residues 615-650 (ENLENPTEEEATDKTDTDGTTSVEDTNSTDVKETTE). The Proton acceptor role is filled by histidine 828.

It belongs to the peptidase C19 family.

The catalysed reaction is Thiol-dependent hydrolysis of ester, thioester, amide, peptide and isopeptide bonds formed by the C-terminal Gly of ubiquitin (a 76-residue protein attached to proteins as an intracellular targeting signal).. Recognizes and hydrolyzes the peptide bond at the C-terminal Gly of ubiquitin. Involved in the processing of poly-ubiquitin precursors as well as that of ubiquitinated proteins. The chain is Ubiquitin carboxyl-terminal hydrolase 8 (UBP8) from Arabidopsis thaliana (Mouse-ear cress).